Here is a 265-residue protein sequence, read N- to C-terminus: Small ribosomal subunit protein uS2 (265 aa).

Residues 231-265 are disordered; the sequence is VEEEYEDYEGSEEDYDYDETEYADSVIPEDGEEAE.

It belongs to the universal ribosomal protein uS2 family.

The protein is Small ribosomal subunit protein uS2 of Nostoc sp. (strain PCC 7120 / SAG 25.82 / UTEX 2576).